Here is a 230-residue protein sequence, read N- to C-terminus: 5'-methylthioadenosine/S-adenosylhomocysteine nucleosidase (230 aa).

Residue Glu12 is the Proton acceptor of the active site. Substrate-binding positions include Gly78, Val152, and 173-174 (ME). Asp197 acts as the Proton donor in catalysis.

It belongs to the PNP/UDP phosphorylase family. MtnN subfamily.

The catalysed reaction is S-adenosyl-L-homocysteine + H2O = S-(5-deoxy-D-ribos-5-yl)-L-homocysteine + adenine. It catalyses the reaction S-methyl-5'-thioadenosine + H2O = 5-(methylsulfanyl)-D-ribose + adenine. It carries out the reaction 5'-deoxyadenosine + H2O = 5-deoxy-D-ribose + adenine. It participates in amino-acid biosynthesis; L-methionine biosynthesis via salvage pathway; S-methyl-5-thio-alpha-D-ribose 1-phosphate from S-methyl-5'-thioadenosine (hydrolase route): step 1/2. In terms of biological role, catalyzes the irreversible cleavage of the glycosidic bond in both 5'-methylthioadenosine (MTA) and S-adenosylhomocysteine (SAH/AdoHcy) to adenine and the corresponding thioribose, 5'-methylthioribose and S-ribosylhomocysteine, respectively. Also cleaves 5'-deoxyadenosine, a toxic by-product of radical S-adenosylmethionine (SAM) enzymes, into 5-deoxyribose and adenine. The chain is 5'-methylthioadenosine/S-adenosylhomocysteine nucleosidase from Glaesserella parasuis serovar 5 (strain SH0165) (Haemophilus parasuis).